Reading from the N-terminus, the 1025-residue chain is Multidrug resistance protein MdtC (1025 aa).

12 helical membrane-spanning segments follow: residues 3 to 23 (FFAL…AITL), 333 to 353 (EVEQ…FLFL), 360 to 380 (IIPA…MYLC), 387 to 407 (LSLM…IVVL), 431 to 451 (VGFT…PLLL), 463 to 483 (FAVT…TLTP), 528 to 548 (LVGV…ISIP), 853 to 873 (VILI…LYES), 875 to 895 (VHPL…LLAL), 897 to 917 (LFNA…IGIV), 953 to 973 (PIMM…LSGG), and 984 to 1004 (ITIV…TPVV).

It belongs to the resistance-nodulation-cell division (RND) (TC 2.A.6) family. MdtC subfamily. Part of a tripartite efflux system composed of MdtA, MdtB and MdtC. MdtC forms a heteromultimer with MdtB.

The protein resides in the cell inner membrane. Its function is as follows. The MdtABC tripartite complex confers resistance against novobiocin and deoxycholate. In Escherichia coli (strain K12 / MC4100 / BW2952), this protein is Multidrug resistance protein MdtC.